A 307-amino-acid polypeptide reads, in one-letter code: MSVLYPLIQALVLFAVAPLLSGITRVARARLHNRRGPGVLQEYRDIIKLLGRQSVGPDASGWVFRLTPYVMVGVMLTIATALPVVTVGSPLPQLGDLITLLYLFAIARFFFAISGLDTGSPFTAIGASREAMLGVLVEPMLLLGLWVAAQVAGSTNISNITDTVYHWPLSQSIPLVLALCACAFATFIEMGKLPFDLAEAEQELQEGPLSEYSGSGFGVMKWGISLKQLVVLQMFVGVFIPWGQMETFTAGGLLLALVIAIVKLVVGVLVIALFENSMARLRLDITPRITWAGFGFAFLAFVSLLAA.

Residues 1-2 (MS) are Periplasmic-facing. A helical transmembrane segment spans residues 3–23 (VLYPLIQALVLFAVAPLLSGI). The Cytoplasmic portion of the chain corresponds to 24–67 (TRVARARLHNRRGPGVLQEYRDIIKLLGRQSVGPDASGWVFRLT). The helical transmembrane segment at 68-88 (PYVMVGVMLTIATALPVVTVG) threads the bilayer. Over 89 to 93 (SPLPQ) the chain is Periplasmic. Residues 94–114 (LGDLITLLYLFAIARFFFAIS) traverse the membrane as a helical segment. Topologically, residues 115–131 (GLDTGSPFTAIGASREA) are cytoplasmic. The chain crosses the membrane as a helical span at residues 132 to 152 (MLGVLVEPMLLLGLWVAAQVA). The Periplasmic portion of the chain corresponds to 153–167 (GSTNISNITDTVYHW). The helical transmembrane segment at 168-188 (PLSQSIPLVLALCACAFATFI) threads the bilayer. At 189–221 (EMGKLPFDLAEAEQELQEGPLSEYSGSGFGVMK) the chain is on the cytoplasmic side. A helical membrane pass occupies residues 222 to 242 (WGISLKQLVVLQMFVGVFIPW). The Periplasmic segment spans residues 243-253 (GQMETFTAGGL). The chain crosses the membrane as a helical span at residues 254 to 274 (LLALVIAIVKLVVGVLVIALF). Over 275-284 (ENSMARLRLD) the chain is Cytoplasmic. The chain crosses the membrane as a helical span at residues 285–305 (ITPRITWAGFGFAFLAFVSLL). At 306 to 307 (AA) the chain is on the periplasmic side.

The protein belongs to the complex I subunit 1 family. As to quaternary structure, FHL comprises of a formate dehydrogenase, unidentified electron carriers and a hydrogenase (isoenzyme 3). In this non-energy conserving pathway molecular hydrogen and carbodioxide from formate are released.

It localises to the cell inner membrane. The protein is Formate hydrogenlyase subunit 4 (hycD) of Escherichia coli (strain K12).